The chain runs to 941 residues: Protocadherin alpha-12 (941 aa).

Residues 1–29 (MVIIGPRGPGSQRLLLSLLLLAAWEVGSG) form the signal peptide. 6 Cadherin domains span residues 30 to 133 (QLHY…PPVF), 134 to 242 (RERE…GPAF), 243 to 350 (DKPS…VPEV), 351 to 455 (MVTS…APAF), 456 to 565 (AQPE…APAL), and 581 to 678 (VPRS…APKT). The Extracellular portion of the chain corresponds to 30-697 (QLHYSVYEEA…DPEAALVDIN (668 aa)). Residues asparagine 257 and asparagine 265 are each glycosylated (N-linked (GlcNAc...) asparagine). The N-linked (GlcNAc...) asparagine glycan is linked to asparagine 548. The chain crosses the membrane as a helical span at residues 698–718 (VYLIIAICAVSSLLVLTLLLY). Over 719 to 941 (TALRCSAPPT…GNSTTDNSDQ (223 aa)) the chain is Cytoplasmic. PXXP repeat units lie at residues 734 to 737 (PGKP), 790 to 793 (PRQP), 823 to 826 (PGGP), 863 to 866 (GPGN), and 882 to 885 (PGSP). The interval 734–885 (PGKPTLVCSS…PDKFIIPGSP (152 aa)) is 5 X 4 AA repeats of P-X-X-P. The interval 818–941 (ILRAGPGGPD…GNSTTDNSDQ (124 aa)) is disordered. Residues 900 to 914 (DKSDFITFGKKEETK) are compositionally biased toward basic and acidic residues.

The protein localises to the cell membrane. In terms of biological role, potential calcium-dependent cell-adhesion protein. May be involved in the establishment and maintenance of specific neuronal connections in the brain. This is Protocadherin alpha-12 (PCDHA12) from Pan troglodytes (Chimpanzee).